The chain runs to 797 residues: G-type lectin S-receptor-like serine/threonine-protein kinase SD2-2 (797 aa).

A signal peptide spans methionine 1–serine 23. The 116-residue stretch at lysine 24–aspartate 139 folds into the Bulb-type lectin domain. At lysine 24–serine 401 the chain is on the extracellular side. 4 N-linked (GlcNAc...) asparagine glycosylation sites follow: asparagine 30, asparagine 49, asparagine 150, and asparagine 197. The EGF-like; atypical domain maps to proline 274 to alanine 310. Disulfide bonds link cysteine 278-cysteine 290, cysteine 284-cysteine 298, cysteine 359-cysteine 381, and cysteine 363-cysteine 369. The region spanning cysteine 321 to serine 407 is the PAN domain. 2 N-linked (GlcNAc...) asparagine glycosylation sites follow: asparagine 366 and asparagine 397. The chain crosses the membrane as a helical span at residues isoleucine 402–proline 422. Topologically, residues leucine 423 to proline 797 are cytoplasmic. In terms of domain architecture, Protein kinase spans asparagine 461 to valine 742. Residues valine 467–valine 475 and lysine 490 contribute to the ATP site. Residues serine 550–threonine 566 are caM-binding. The active-site Proton acceptor is aspartate 585. The interval glycine 767 to proline 797 is disordered. Over residues serine 784–proline 797 the composition is skewed to low complexity.

It belongs to the protein kinase superfamily. Ser/Thr protein kinase family. In terms of processing, autophosphorylated. As to expression, expressed in the shoot apex and roots, specifically in lateral roots and at the root-hypocotyl transition zone.

The protein resides in the cell membrane. The enzyme catalyses L-seryl-[protein] + ATP = O-phospho-L-seryl-[protein] + ADP + H(+). It carries out the reaction L-threonyl-[protein] + ATP = O-phospho-L-threonyl-[protein] + ADP + H(+). Functionally, serine/threonine-protein kinase. This is G-type lectin S-receptor-like serine/threonine-protein kinase SD2-2 (SD22) from Arabidopsis thaliana (Mouse-ear cress).